Consider the following 878-residue polypeptide: Serine/threonine-protein kinase D2 (878 aa).

Residues 1-12 (MATAPSYPAGLP) show a composition bias toward low complexity. Residues 1 to 35 (MATAPSYPAGLPGSPGPGSPPPPGGLELQSPPPLL) are disordered. Positions 14 to 35 (SPGPGSPPPPGGLELQSPPPLL) are enriched in pro residues. Serine 30 is modified (phosphoserine). A Phosphotyrosine modification is found at tyrosine 87. The Phorbol-ester/DAG-type 1 zinc-finger motif lies at 138–188 (PHALTVHSYRAPAFCDHCGEMLFGLVRQGLKCDGCGLNYHKRCAFSIPNNC). A phosphoserine mark is found at serine 197, serine 198, serine 200, serine 203, serine 206, serine 212, and serine 214. Residues 224–247 (RSTTELLPRRPPSSSSSSSASSYT) form a disordered region. The span at 236-245 (SSSSSSSASS) shows a compositional bias: low complexity. Residue serine 244 is modified to Phosphoserine; by CSNK1D and CSNK1E. A Phorbol-ester/DAG-type 2 zinc finger spans residues 264-314 (PHTFLIHSYTRPTVCQACKKLLKGLFRQGLQCKDCKFNCHKRCATRVPNDC). Positions 343-373 (ESEDSGVIPGSHSENALHASEEEEGEGGKAQ) are disordered. The region spanning 397–509 (TTLREGWVVH…WETAIRQALM (113 aa)) is the PH domain. At tyrosine 407 the chain carries Phosphotyrosine. Position 438 is a phosphotyrosine; by ABL1 (tyrosine 438). At serine 518 the chain carries Phosphoserine. The Protein kinase domain occupies 551 to 807 (IFPDEVLGSG…VDKSLSHPWL (257 aa)). Residues 557–565 (LGSGQFGVV) and lysine 580 each bind ATP. The Proton acceptor role is filled by aspartate 674. Residue serine 706 is modified to Phosphoserine; by PKC. Serine 710 carries the post-translational modification Phosphoserine. Tyrosine 717 is modified (phosphotyrosine; by ABL1). The Important for ABL1-mediated Tyr-717 phosphorylation motif lies at 724–726 (LNQ). Residues 844 to 869 (HPLPGSGLPTDRDLGGACPPQDHDMQ) form a disordered region. Position 876 is a phosphoserine; by autocatalysis (serine 876).

It belongs to the protein kinase superfamily. CAMK Ser/Thr protein kinase family. PKD subfamily. Interacts (via C-terminus) with LCK. Interacts (via N-terminal AP-rich region) with CIB1 isoform 2. Interacts (via N-terminus and zing-finger domain 1 and 2) with PRKCD in response to oxidative stress; the interaction is independent of PRKD2 tyrosine phosphorylation. It depends on Mg(2+) as a cofactor. Phosphorylation of Ser-876 correlates with the activation status of the kinase. Ser-706 or/and Ser-710 are probably phosphorylated by PKC. Phosphorylation at Ser-244 by CSNK1D and CSNK1E promotes nuclear localization and substrate targeting. Phosphorylation at Ser-244, Ser-706 and Ser-710 is required for nuclear localization. Phosphorylated at Tyr-438 by ABL1 in response to oxidative stress. Phosphorylated at Tyr-717 by ABL1 specifically in response to oxidative stress; requires prior phosphorylation at Ser-706 or/and Ser-710. As to expression, widely expressed.

The protein resides in the cytoplasm. It is found in the cell membrane. The protein localises to the nucleus. Its subcellular location is the golgi apparatus. It localises to the trans-Golgi network. It catalyses the reaction L-seryl-[protein] + ATP = O-phospho-L-seryl-[protein] + ADP + H(+). The catalysed reaction is L-threonyl-[protein] + ATP = O-phospho-L-threonyl-[protein] + ADP + H(+). With respect to regulation, activated by DAG and phorbol esters. Phorbol-ester/DAG-type domains bind DAG, mediating translocation to membranes. Autophosphorylation of Ser-710 and phosphorylation of Ser-706 by PKC relieves auto-inhibition by the PH domain. Catalytic activity is further increased by phosphorylation at Tyr-717 in response to oxidative stress. Functionally, serine/threonine-protein kinase that converts transient diacylglycerol (DAG) signals into prolonged physiological effects downstream of PKC, and is involved in the regulation of cell proliferation via MAPK1/3 (ERK1/2) signaling, oxidative stress-induced NF-kappa-B activation, inhibition of HDAC7 transcriptional repression, signaling downstream of T-cell antigen receptor (TCR) and cytokine production, and plays a role in Golgi membrane trafficking, angiogenesis, secretory granule release and cell adhesion. May potentiate mitogenesis induced by the neuropeptide bombesin by mediating an increase in the duration of MAPK1/3 (ERK1/2) signaling, which leads to accumulation of immediate-early gene products including FOS that stimulate cell cycle progression. In response to oxidative stress, is phosphorylated at Tyr-438 and Tyr-717 by ABL1, which leads to the activation of PRKD2 without increasing its catalytic activity, and mediates activation of NF-kappa-B. In response to the activation of the gastrin receptor CCKBR, is phosphorylated at Ser-244 by CSNK1D and CSNK1E, translocates to the nucleus, phosphorylates HDAC7, leading to nuclear export of HDAC7 and inhibition of HDAC7 transcriptional repression of NR4A1/NUR77. Upon TCR stimulation, is activated independently of ZAP70, translocates from the cytoplasm to the nucleus and is required for interleukin-2 (IL2) promoter up-regulation. During adaptive immune responses, is required in peripheral T-lymphocytes for the production of the effector cytokines IL2 and IFNG after TCR engagement and for optimal induction of antibody responses to antigens. In epithelial cells stimulated with lysophosphatidic acid (LPA), is activated through a PKC-dependent pathway and mediates LPA-stimulated interleukin-8 (IL8) secretion via a NF-kappa-B-dependent pathway. During TCR-induced T-cell activation, interacts with and is activated by the tyrosine kinase LCK, which results in the activation of the NFAT transcription factors. In the trans-Golgi network (TGN), regulates the fission of transport vesicles that are on their way to the plasma membrane and in polarized cells is involved in the transport of proteins from the TGN to the basolateral membrane. Plays an important role in endothelial cell proliferation and migration prior to angiogenesis, partly through modulation of the expression of KDR/VEGFR2 and FGFR1, two key growth factor receptors involved in angiogenesis. In secretory pathway, is required for the release of chromogranin-A (CHGA)-containing secretory granules from the TGN. Downstream of PRKCA, plays important roles in angiotensin-2-induced monocyte adhesion to endothelial cells. Plays a regulatory role in angiogenesis and tumor growth by phosphorylating a downstream mediator CIB1 isoform 2, resulting in vascular endothelial growth factor A (VEGFA) secretion. The sequence is that of Serine/threonine-protein kinase D2 (PRKD2) from Homo sapiens (Human).